Here is a 245-residue protein sequence, read N- to C-terminus: 4-hydroxy-tetrahydrodipicolinate reductase (245 aa).

Residues 7–12, 75–77, and 102–105 contribute to the NAD(+) site; these read GAKGKV, GTT, and APNF. His132 (proton donor/acceptor) is an active-site residue. Residue His133 participates in (S)-2,3,4,5-tetrahydrodipicolinate binding. Lys136 acts as the Proton donor in catalysis. 142-143 is a (S)-2,3,4,5-tetrahydrodipicolinate binding site; the sequence is GT.

Belongs to the DapB family.

It localises to the cytoplasm. It carries out the reaction (S)-2,3,4,5-tetrahydrodipicolinate + NAD(+) + H2O = (2S,4S)-4-hydroxy-2,3,4,5-tetrahydrodipicolinate + NADH + H(+). The enzyme catalyses (S)-2,3,4,5-tetrahydrodipicolinate + NADP(+) + H2O = (2S,4S)-4-hydroxy-2,3,4,5-tetrahydrodipicolinate + NADPH + H(+). It participates in amino-acid biosynthesis; L-lysine biosynthesis via DAP pathway; (S)-tetrahydrodipicolinate from L-aspartate: step 4/4. Its function is as follows. Catalyzes the conversion of 4-hydroxy-tetrahydrodipicolinate (HTPA) to tetrahydrodipicolinate. The chain is 4-hydroxy-tetrahydrodipicolinate reductase from Mycobacterium sp. (strain KMS).